The chain runs to 699 residues: D-(-)-3-hydroxybutyrate oligomer hydrolase (699 aa).

A signal peptide spans 1-19 (MNPSLCIAVAFACPLSALA). Residue Ser303 is the Charge relay system of the active site.

Belongs to the D-(-)-3-hydroxybutyrate oligomer hydrolase family.

It localises to the secreted. The enzyme catalyses (3R)-hydroxybutanoate dimer + H2O = 2 (R)-3-hydroxybutanoate + H(+). Its pathway is lipid metabolism; butanoate metabolism. Participates in the degradation of poly-3-hydroxybutyrate (PHB). It works downstream of poly(3-hydroxybutyrate) depolymerase, hydrolyzing D(-)-3-hydroxybutyrate oligomers of various length (3HB-oligomers) into 3HB-monomers. The sequence is that of D-(-)-3-hydroxybutyrate oligomer hydrolase from Azoarcus sp. (strain BH72).